A 533-amino-acid polypeptide reads, in one-letter code: MKCHYEALGVRRDASEEELKKAYRKLALKWHPDKNLDNAAEAAEQFKLIQAAYDVLSDPQERAWYDNHREALLKGGLDGEYQDDSLDLLHYFTVTCYSGYGDDEKGFYTVYRNVFEMIAKEELESALEEDMEDFPTFGDSQSDYDTVVHPFYAYWQSFCTQKNFAWKEEYDTRQASNRWEKRAMEKENKKIRDKARKEKNELVRQLVAFIRKRDRRVQAHRKLVEEQNAEKARKAEAMRRQQKLKQAKLAEQYREQSWMAVADLEKELREMEAQYEKQFGDGSGEDEAEDQELRDGQDGKDSDEAEDAELYDGLYCPACDKSFKTEKAMRNHEKSKKHREMVALLKQQLEEEEANFSGPQTDENSLNANSEEEMEDAPKQKLSRKQKKKKQKPAQNYDDNFNENGIGEGVKIDPEDTNLNQNSAKESEDSLQENVGVTETVELCDDPKTEAKSVSKPKGKKAKDTKKSVRVPAEPQTMSDVLISCTTCHSEFPSRNKLFDHLKATGHARAPSSSTSLNSVTNSRNKKEKRKNR.

The J domain occupies C3–E70. 3 disordered regions span residues Q278–Y311, K327–A473, and K503–R533. 2 positions are modified to phosphoserine: S283 and S302. Positions Q291–S302 are enriched in basic and acidic residues. The C2H2-type 1 zinc finger occupies Y315–R339. A compositionally biased stretch (polar residues) spans S357–N369. Position 370 is a phosphoserine (S370). Basic residues predominate over residues K381 to K392. The span at P393 to E403 shows a compositional bias: polar residues. Residues S455–D464 show a composition bias toward basic residues. A C2H2-type 2 zinc finger spans residues S484–A508. S512 carries the post-translational modification Phosphoserine. Low complexity predominate over residues S512–S523. A compositionally biased stretch (basic residues) spans R524–R533.

As to quaternary structure, interacts with HSPA8, PA2G4 and ZNF622.

The protein localises to the cytoplasm. It is found in the nucleus. The protein resides in the nucleolus. In terms of biological role, may act as a co-chaperone for HSP70. May play a role in ribosomal RNA (rRNA) biogenesis, possibly in the maturation of the 60S subunit. Binds the precursor 45S rRNA. This Bos taurus (Bovine) protein is DnaJ homolog subfamily C member 21 (DNAJC21).